A 207-amino-acid chain; its full sequence is Outer-membrane lipoprotein LolB (207 aa).

Positions 1–21 (MPLPDFRLIRLLPLAALVLTA) are cleaved as a signal peptide. Residue cysteine 22 is the site of N-palmitoyl cysteine attachment. The S-diacylglycerol cysteine moiety is linked to residue cysteine 22.

Belongs to the LolB family. As to quaternary structure, monomer.

It is found in the cell outer membrane. Its function is as follows. Plays a critical role in the incorporation of lipoproteins in the outer membrane after they are released by the LolA protein. The protein is Outer-membrane lipoprotein LolB of Shigella boydii serotype 18 (strain CDC 3083-94 / BS512).